Reading from the N-terminus, the 92-residue chain is Turripeptide UID-02 (92 aa).

An N-terminal signal peptide occupies residues 1–21 (MGFYMLLTVALLLTSLMNVEA). A propeptide spanning residues 22-39 (TPVDQAERSALEKSGLGN) is cleaved from the precursor.

As to expression, expressed by the venom duct.

The protein resides in the secreted. This chain is Turripeptide UID-02, found in Gemmula speciosa (Splendid gem-turris).